The primary structure comprises 130 residues: Small ribosomal subunit protein uS11 (130 aa).

Belongs to the universal ribosomal protein uS11 family. In terms of assembly, part of the 30S ribosomal subunit.

Functionally, located on the platform of the 30S subunit. The chain is Small ribosomal subunit protein uS11 from Ignicoccus hospitalis (strain KIN4/I / DSM 18386 / JCM 14125).